The following is a 519-amino-acid chain: MARRALKLASLAAAASGIYLYGNKFMDPNDFGVVRVGRAIATTAVITYDYLTSLRNVPYGSEEYDFLKSQVHLRSAERLRELCCANRGTFIKVGQHLGALDYLLPEEYTRTLKVLHSQAPQSTRQEIEQVIREDLGKEIKELFVSFEDTPLGAASLAQVHKAVLQDGRTVAVKIQHPKVQAQSSKDIFLMEVLLLVVKQIFPDFEFMWLVEEAKKNLPLELDFLNEGRNAEKVAQMLKNFEFLKVPRIYWELSTRRVLLMEFMEGGQVNDKAYMEKNGIDVNEISRNLGKLYSEMIFVNGFVHCDPHPGNVLVKKCPDSGKAYIILLDHGLYQVLSESFRMDYCRLWLALIKADMKRVQKYSRRLGAGDLYPLFACMLTARSWESVNRGIDQSPVSASEDVEIRSNAAAYLPQITQLLNNVPRQMLLLLKTNDLLRGIESALHTRASASSFLNMSRCCIRAVSTYQRSKSHSLYRRVHISLTEALSLWQINLYELFLWLKGSRLGSWVIAFLSRMHHST.

One can recognise a Protein kinase domain in the interval 145–481 (SFEDTPLGAA…SLYRRVHISL (337 aa)). ATP-binding positions include 151-159 (LGAASLAQV) and lysine 173. The Proton acceptor role is filled by aspartate 305.

Belongs to the protein kinase superfamily. ADCK protein kinase family.

Its subcellular location is the mitochondrion. Functionally, appears to be essential for maintaining mitochondrial cristae formation and mitochondrial function by acting via YME1L1 in a kinase-independent manner to regulate essential mitochondrial structural proteins OPA1 and IMMT. The action of this enzyme is not yet clear. It is not known if it has protein kinase activity and what type of substrate it would phosphorylate (Ser, Thr or Tyr). This is AarF domain-containing protein kinase 1 (ADCK1) from Gallus gallus (Chicken).